A 100-amino-acid polypeptide reads, in one-letter code: Large ribosomal subunit protein mL53 (100 aa).

It belongs to the mitochondrion-specific ribosomal protein mL53 family. Component of the mitochondrial large ribosomal subunit (mt-LSU). Mature yeast 74S mitochondrial ribosomes consist of a small (37S) and a large (54S) subunit. The 37S small subunit contains a 15S ribosomal RNA (15S mt-rRNA) and at least 32 different proteins. The 54S large subunit contains a 21S rRNA (21S mt-rRNA) and at least 45 different proteins.

It localises to the mitochondrion. In terms of biological role, component of the mitochondrial ribosome (mitoribosome), a dedicated translation machinery responsible for the synthesis of mitochondrial genome-encoded proteins, including at least some of the essential transmembrane subunits of the mitochondrial respiratory chain. The mitoribosomes are attached to the mitochondrial inner membrane and translation products are cotranslationally integrated into the membrane. In Schizosaccharomyces pombe (strain 972 / ATCC 24843) (Fission yeast), this protein is Large ribosomal subunit protein mL53 (mrpl44).